A 597-amino-acid polypeptide reads, in one-letter code: Probable methyltransferase-like protein 25 (597 aa).

Residues 245–254 (ECKGDAESVQ) show a composition bias toward basic and acidic residues. Disordered stretches follow at residues 245-265 (ECKG…DLSA) and 317-342 (TSSQ…KARD). The segment covering 317 to 326 (TSSQVQNTEK) has biased composition (polar residues).

Its function is as follows. Probable methyltransferase. This Mus musculus (Mouse) protein is Probable methyltransferase-like protein 25 (Mettl25).